The sequence spans 267 residues: MINLTPTELERYSRQMMLPNFGEAAQKRLKSATVLVTGVGGLGGTAALYLAVAGVGRLILVRGGDLRLDDMNRQVLMTDDWVGKPRVFKAKETLQAINPDIQIETIHDYVTSDNVDSLVQSADMALDCAHNFTERDLLNSACVRWRKPMVEAAMDGMEAYLTTIIPGVTPCLSCIFPEKPEWDRRGFSVLGAVSGTLACLTALEAIKLITGFSQPLLSQLLTIDLNRMEFAKRRLYRDRSCPVCGNDAPWRYAQSNSMETSSNCTHS.

This sequence belongs to the HesA/MoeB/ThiF family.

The protein is Protein HesA, heterocyst (hesA1) of Trichormus variabilis (strain ATCC 29413 / PCC 7937) (Anabaena variabilis).